The primary structure comprises 188 residues: Gamma-glutamylcyclotransferase (188 aa).

19 to 22 provides a ligand contact to substrate; the sequence is YFAY. The active-site Proton acceptor is the Glu-98. Ser-173 is modified (phosphoserine).

It belongs to the gamma-glutamylcyclotransferase family. As to quaternary structure, homodimer.

It catalyses the reaction an alpha-(gamma-L-glutamyl)-L-amino acid = 5-oxo-L-proline + an L-alpha-amino acid. Functionally, catalyzes the formation of 5-oxoproline from gamma-glutamyl dipeptides and may play a significant role in glutathione homeostasis. Induces release of cytochrome c from mitochondria with resultant induction of apoptosis. In Bos taurus (Bovine), this protein is Gamma-glutamylcyclotransferase (GGCT).